Here is a 1060-residue protein sequence, read N- to C-terminus: Desmoglein-1-beta (1060 aa).

Positions 1–23 (MDWHSFRIAALLLTSLVVLEVNS) are cleaved as a signal peptide. Residues 24–49 (EFQIQVRDHNAKNGTIKWHSIRRQKR) constitute a propeptide that is removed on maturation. Cadherin domains lie at 50-157 (EWIK…PPVF), 158-269 (SMTT…IPYL), 270-389 (EQSS…RPGS), and 386-493 (RPGS…PGSD). At 50–567 (EWIKFAAACR…ITEDNVHFGP (518 aa)) the chain is on the extracellular side. N-linked (GlcNAc...) (high mannose) asparagine glycosylation occurs at N110. N-linked (GlcNAc...) asparagine glycosylation is present at N180. Residues 490 to 560 (PGSDGGGSSS…PEPEPFDITE (71 aa)) are disordered. A compositionally biased stretch (gly residues) spans 492–503 (SDGGGSSSGSGG). Positions 510–519 (NGYQGTSTVG) are enriched in polar residues. Over residues 525-537 (GSGGVTSSGGGSG) the composition is skewed to gly residues. The segment covering 549 to 560 (DEPEPEPFDITE) has biased composition (acidic residues). A helical membrane pass occupies residues 568-588 (AGIGLLIMGFLVLGLVPFLLI). Topologically, residues 589 to 1060 (CCDCGGAPGG…TKYSTVQYSK (472 aa)) are cytoplasmic. Low complexity predominate over residues 792–801 (PDPDSSWPPQ). The segment at 792 to 811 (PDPDSSWPPQSTEPMCPQST) is disordered. Desmoglein repeat repeat units follow at residues 835–861 (AYPSGPGVQHPLPIPDPLGYGNVTVRE), 862–891 (SYATSGTLKPSVHFHDNQQASNVVVTERVV), 892–921 (GPVPGADLHGMLEIPDLRDGTNVIVTERVI), 922–949 (APGSSLPTSLTIPNPRETSNVVVTERVI), and 950–978 (QPTSGMIGNLSMTPELSSAQNVIVTERVV).

In terms of assembly, interacts with DSC3; there is evidence to suggest that the interaction promotes cell-cell adhesion of keratinocytes. In terms of tissue distribution, expressed in epidermis.

It localises to the cell membrane. It is found in the cell junction. The protein resides in the desmosome. Its subcellular location is the cytoplasm. The protein localises to the nucleus. Functionally, component of intercellular desmosome junctions. Involved in the interaction of plaque proteins and intermediate filaments mediating cell-cell adhesion. This Mus musculus (Mouse) protein is Desmoglein-1-beta (Dsg1b).